A 269-amino-acid chain; its full sequence is Putative pyruvate, phosphate dikinase regulatory protein (269 aa).

Residue Gly147 to Thr154 coordinates ADP.

This sequence belongs to the pyruvate, phosphate/water dikinase regulatory protein family. PDRP subfamily.

It carries out the reaction N(tele)-phospho-L-histidyl/L-threonyl-[pyruvate, phosphate dikinase] + ADP = N(tele)-phospho-L-histidyl/O-phospho-L-threonyl-[pyruvate, phosphate dikinase] + AMP + H(+). It catalyses the reaction N(tele)-phospho-L-histidyl/O-phospho-L-threonyl-[pyruvate, phosphate dikinase] + phosphate + H(+) = N(tele)-phospho-L-histidyl/L-threonyl-[pyruvate, phosphate dikinase] + diphosphate. Functionally, bifunctional serine/threonine kinase and phosphorylase involved in the regulation of the pyruvate, phosphate dikinase (PPDK) by catalyzing its phosphorylation/dephosphorylation. The polypeptide is Putative pyruvate, phosphate dikinase regulatory protein (Trichlorobacter lovleyi (strain ATCC BAA-1151 / DSM 17278 / SZ) (Geobacter lovleyi)).